A 242-amino-acid chain; its full sequence is Murein peptide amidase A (242 aa).

Residues methionine 1–histidine 234 form the Peptidase M14 domain. Residues histidine 49, glutamate 52, and histidine 157 each contribute to the Zn(2+) site. Glutamate 210 (proton donor/acceptor) is an active-site residue.

The protein belongs to the peptidase M14 family. In terms of assembly, homodimer. Requires Zn(2+) as cofactor.

Its subcellular location is the cytoplasm. The enzyme catalyses L-alanyl-gamma-D-glutamyl-meso-2,6-diaminopimelate + H2O = L-alanyl-D-glutamate + meso-2,6-diaminopimelate. It participates in cell wall degradation; peptidoglycan degradation. Involved in muropeptide degradation. Catalyzes the hydrolysis of the gamma-D-glutamyl-diaminopimelic acid (gamma-D-Glu-Dap) amide bond in the murein tripeptide L-alanyl-gamma-D-glutamyl-meso-diaminopimelic acid, leading to the formation of L-Ala-gamma-D-Glu and Dap. This Escherichia coli O157:H7 protein is Murein peptide amidase A.